The following is a 213-amino-acid chain: Orotate phosphoribosyltransferase (213 aa).

Lys-26 provides a ligand contact to 5-phospho-alpha-D-ribose 1-diphosphate. Orotate is bound at residue 34 to 35; the sequence is FF. 5-phospho-alpha-D-ribose 1-diphosphate is bound by residues 72 to 73, Arg-99, Lys-100, Lys-103, His-105, and 124 to 132; these read YK and DDVITAGTA. The orotate site is built by Thr-128 and Arg-156.

Belongs to the purine/pyrimidine phosphoribosyltransferase family. PyrE subfamily. As to quaternary structure, homodimer. Mg(2+) serves as cofactor.

The catalysed reaction is orotidine 5'-phosphate + diphosphate = orotate + 5-phospho-alpha-D-ribose 1-diphosphate. The protein operates within pyrimidine metabolism; UMP biosynthesis via de novo pathway; UMP from orotate: step 1/2. Its function is as follows. Catalyzes the transfer of a ribosyl phosphate group from 5-phosphoribose 1-diphosphate to orotate, leading to the formation of orotidine monophosphate (OMP). The protein is Orotate phosphoribosyltransferase of Escherichia coli O157:H7.